Here is a 131-residue protein sequence, read N- to C-terminus: U-scoloptoxin-Er5e (131 aa).

The signal sequence occupies residues 1–22 (MKTNCEFPLLCLLIVLVANVEG). A propeptide spanning residues 23–94 (EVEDNELKMV…KRLWRNWERR (72 aa)) is cleaved from the precursor. RLWRNWE repeat units lie at residues 34 to 40 (RLWRNWE), 61 to 67 (RLWRNWE), and 86 to 92 (RLWRNWE). Pyrrolidone carboxylic acid is present on Gln-95. The RLWRNWE 4; approximate repeat unit spans residues 107–113 (ELWRNWE). Positions 112–131 (WEDLKRRQVVDLNDEQKTTG) are excised as a propeptide.

The protein belongs to the scoloptoxin-08 family. In terms of tissue distribution, expressed by the venom gland.

Its subcellular location is the secreted. The sequence is that of U-scoloptoxin-Er5e from Ethmostigmus rubripes (Giant centipede).